We begin with the raw amino-acid sequence, 531 residues long: MASTELSLKRTLTDILEDELYHTNPGHSQFTSHYQNYHPNASITPYKLVNKNKENNTFTWNHSLQHQNESSAASIPPQQTYHFPIFNKYADPTLTTTTSFTTSEATANDRQINNVHLIPNEIKGASETPLQKTVNLKNIMKVSDPYVPTRNTFNYDVKISNDFFDNGDNLYGNDEEVLFYEDNYNPKMQWSLQDNSAAINNEDARAIFNNEFDSDDDDISDDEEDEIEENCLQQEQHQEEPLLSLDVTPISMFGSDQKTGRAKSSSHLFNEYSYVDSNMDSISSVVSEDLLDERGHEKIEDEDEDNDLDEDDIYDISLLKNRRKQSFVLNKNTIDFERFPSPSTSANVPSTATTGKRKPAKSSSNRSCVSNSNENGTLERIKKPTSAVVSSNASRRKLINYTKKHLSSHSSTNSNSKPSTASPSAHTSSSDGNNEIFTCQIMNLITNEPCGAQFSRSYDLTRHQNTIHAKRKIVFRCSECIKILGSEGYQKTFSRLDALTRHIKSKHEDLSLEQRQEVTKFAKANIGYVMG.

A disordered region spans residues 338-432 (RFPSPSTSAN…PSAHTSSSDG (95 aa)). Over residues 341-354 (SPSTSANVPSTATT) the composition is skewed to polar residues. Low complexity predominate over residues 362–375 (SSSNRSCVSNSNEN). The Nuclear localization signal motif lies at 382–398 (KKPTSAVVSSNASRRKL). A compositionally biased stretch (basic residues) spans 394-407 (SRRKLINYTKKHLS). Residues 408–430 (SHSSTNSNSKPSTASPSAHTSSS) show a composition bias toward low complexity.

As to quaternary structure, probably interacts with SEC63. Interacts with MUB1, UBR2 and RPN2. In terms of processing, ubiquitinated by UBR2 in the presence of UBC2; which leads to proteasomal degradation.

It is found in the nucleus. Acts as a transcriptional activator of a number of genes encoding proteasomal subunits. Binds to a PACE (proteasome-associated control element) DNA sequence 5'-GGTGGCAAA-3'. Its expression is in turn regulated by the 26S proteasome, thereby providing a negative feedback control mechanism. Required for normal growth at low temperatures. In Saccharomyces cerevisiae (strain ATCC 204508 / S288c) (Baker's yeast), this protein is Protein RPN4 (RPN4).